Reading from the N-terminus, the 165-residue chain is Ureidoglycolate lyase (165 aa).

This sequence belongs to the ureidoglycolate lyase family. As to quaternary structure, homodimer. It depends on Ni(2+) as a cofactor.

The catalysed reaction is (S)-ureidoglycolate = urea + glyoxylate. The protein operates within nitrogen metabolism; (S)-allantoin degradation. Its function is as follows. Catalyzes the catabolism of the allantoin degradation intermediate (S)-ureidoglycolate, generating urea and glyoxylate. Involved in the utilization of allantoin as nitrogen source. This chain is Ureidoglycolate lyase, found in Chelativorans sp. (strain BNC1).